Consider the following 891-residue polypeptide: Valine--tRNA ligase (891 aa).

Residues 43 to 53 (PFTSGTLHLGH) carry the 'HIGH' region motif. The short motif at 536–540 (KMSKS) is the 'KMSKS' region element. ATP is bound at residue Lys539.

The protein belongs to the class-I aminoacyl-tRNA synthetase family. ValS type 2 subfamily.

It is found in the cytoplasm. It carries out the reaction tRNA(Val) + L-valine + ATP = L-valyl-tRNA(Val) + AMP + diphosphate. Catalyzes the attachment of valine to tRNA(Val). As ValRS can inadvertently accommodate and process structurally similar amino acids such as threonine, to avoid such errors, it has a 'posttransfer' editing activity that hydrolyzes mischarged Thr-tRNA(Val) in a tRNA-dependent manner. This Pyrococcus horikoshii (strain ATCC 700860 / DSM 12428 / JCM 9974 / NBRC 100139 / OT-3) protein is Valine--tRNA ligase.